We begin with the raw amino-acid sequence, 333 residues long: CRISPR-associated endonuclease Cas1 (333 aa).

3 residues coordinate Mn(2+): Glu-162, His-226, and Glu-241.

This sequence belongs to the CRISPR-associated endonuclease Cas1 family. As to quaternary structure, homodimer, forms a heterotetramer with a Cas2 homodimer. Requires Mg(2+) as cofactor. Mn(2+) serves as cofactor.

Functionally, CRISPR (clustered regularly interspaced short palindromic repeat), is an adaptive immune system that provides protection against mobile genetic elements (viruses, transposable elements and conjugative plasmids). CRISPR clusters contain spacers, sequences complementary to antecedent mobile elements, and target invading nucleic acids. CRISPR clusters are transcribed and processed into CRISPR RNA (crRNA). Acts as a dsDNA endonuclease. Involved in the integration of spacer DNA into the CRISPR cassette. This chain is CRISPR-associated endonuclease Cas1, found in Nanoarchaeum equitans (strain Kin4-M).